The following is a 71-amino-acid chain: Conotoxin AbVIG (71 aa).

The N-terminal stretch at V1–A17 is a signal peptide. A propeptide spanning residues E18–T40 is cleaved from the precursor. Intrachain disulfides connect C43/C57, C50/C61, and C56/C68.

Belongs to the conotoxin O1 superfamily. As to expression, expressed by the venom duct.

The protein resides in the secreted. The protein is Conotoxin AbVIG of Conus abbreviatus (Abbreviated cone).